The sequence spans 360 residues: Peptide chain release factor 1 (360 aa).

The residue at position 235 (Q235) is an N5-methylglutamine. The disordered stretch occupies residues Q286–N311.

The protein belongs to the prokaryotic/mitochondrial release factor family. Post-translationally, methylated by PrmC. Methylation increases the termination efficiency of RF1.

Its subcellular location is the cytoplasm. Functionally, peptide chain release factor 1 directs the termination of translation in response to the peptide chain termination codons UAG and UAA. In Histophilus somni (strain 2336) (Haemophilus somnus), this protein is Peptide chain release factor 1.